Consider the following 740-residue polypeptide: Polyribonucleotide nucleotidyltransferase (740 aa).

Mg(2+) contacts are provided by Asp-492 and Asp-498. Positions 559–618 (PMVQTLEIQKEKIRDVIGLGGKVIKELCKTFDVEIDISENGEVKVWGNVGENVKKAVQSI) constitute a KH domain. Residues 628 to 696 (GDIFDGEVVK…HKNRVKLTLR (69 aa)) enclose the S1 motif domain.

Belongs to the polyribonucleotide nucleotidyltransferase family. Requires Mg(2+) as cofactor.

It is found in the cytoplasm. The catalysed reaction is RNA(n+1) + phosphate = RNA(n) + a ribonucleoside 5'-diphosphate. Functionally, involved in mRNA degradation. Catalyzes the phosphorolysis of single-stranded polyribonucleotides processively in the 3'- to 5'-direction. This is Polyribonucleotide nucleotidyltransferase from Orientia tsutsugamushi (strain Boryong) (Rickettsia tsutsugamushi).